The sequence spans 96 residues: Evasin P1074 (96 aa).

The N-terminal stretch at 1-28 is a signal peptide; it reads MAFNMITFLQMAVFVVILFNINLHSASA. Cystine bridges form between Cys48/Cys67, Cys52/Cys69, and Cys63/Cys80. Asn74 carries N-linked (GlcNAc...) asparagine glycosylation.

It is found in the secreted. In terms of biological role, salivary chemokine-binding protein which binds to host chemokines CXCL1 and CXCL8. The chain is Evasin P1074 from Ixodes ricinus (Common tick).